The sequence spans 278 residues: Energy-coupling factor transporter ATP-binding protein EcfA1 (278 aa).

Positions isoleucine 5 to glutamine 240 constitute an ABC transporter domain. Residue glycine 40–serine 47 coordinates ATP.

Belongs to the ABC transporter superfamily. Energy-coupling factor EcfA family. Forms a stable energy-coupling factor (ECF) transporter complex composed of 2 membrane-embedded substrate-binding proteins (S component), 2 ATP-binding proteins (A component) and 2 transmembrane proteins (T component).

The protein localises to the cell membrane. In terms of biological role, ATP-binding (A) component of a common energy-coupling factor (ECF) ABC-transporter complex. Unlike classic ABC transporters this ECF transporter provides the energy necessary to transport a number of different substrates. This Streptococcus sanguinis (strain SK36) protein is Energy-coupling factor transporter ATP-binding protein EcfA1.